Consider the following 245-residue polypeptide: TLC domain-containing protein 5 (245 aa).

6 consecutive transmembrane segments (helical) span residues 1–21, 38–58, 75–95, 99–119, 162–182, and 191–211; these read MALA…SLYI, LVTF…GFID, VHVL…CVYF, GALM…ALVL, FLFV…LLFC, and WFVK…MFSI. Residues 29–204 enclose the TLC domain; it reads HRSYEWSCRL…AGGVAMYAVS (176 aa).

Belongs to the TLCD5 family.

Its subcellular location is the membrane. This chain is TLC domain-containing protein 5, found in Homo sapiens (Human).